The sequence spans 209 residues: Small ribosomal subunit protein uS3 (209 aa).

The KH type-2 domain occupies 17-86 (IDEFLEKELR…NPQIEVEEIK (70 aa)).

This sequence belongs to the universal ribosomal protein uS3 family. As to quaternary structure, part of the 30S ribosomal subunit.

Its function is as follows. Binds the lower part of the 30S subunit head. In Thermococcus kodakarensis (strain ATCC BAA-918 / JCM 12380 / KOD1) (Pyrococcus kodakaraensis (strain KOD1)), this protein is Small ribosomal subunit protein uS3.